A 292-amino-acid polypeptide reads, in one-letter code: Protoheme IX farnesyltransferase (292 aa).

9 consecutive transmembrane segments (helical) span residues 13–33, 35–55, 84–104, 106–126, 135–155, 161–181, 206–226, 231–251, and 263–283; these read ILFG…QGSI, ILLL…GCVV, VALV…WFGV, GYAF…YSLW, TVIG…AVTH, ALLL…AIAI, IECV…YCFG, FFLI…IIGF, and FFLY…FTYQ.

It belongs to the UbiA prenyltransferase family. Protoheme IX farnesyltransferase subfamily.

The protein resides in the cell inner membrane. It catalyses the reaction heme b + (2E,6E)-farnesyl diphosphate + H2O = Fe(II)-heme o + diphosphate. The protein operates within porphyrin-containing compound metabolism; heme O biosynthesis; heme O from protoheme: step 1/1. Functionally, converts heme B (protoheme IX) to heme O by substitution of the vinyl group on carbon 2 of heme B porphyrin ring with a hydroxyethyl farnesyl side group. The chain is Protoheme IX farnesyltransferase from Acinetobacter baumannii (strain AB307-0294).